A 155-amino-acid chain; its full sequence is Plastocyanin, chloroplastic (155 aa).

The transit peptide at 1–58 directs the protein to the chloroplast; the sequence is MAALSSAAVSVPSFAAATPMRSSRSSRMVVRASLGKKAASAAVAMAAGAMLLGGSAMA. Positions 59–155 constitute a Plastocyanin-like domain; it reads QDVLLGANGG…AGMVGKVTVN (97 aa). Cu cation-binding residues include histidine 95, cysteine 140, histidine 143, and methionine 148.

It belongs to the plastocyanin family. It depends on Cu(2+) as a cofactor.

The protein resides in the plastid. It is found in the chloroplast thylakoid membrane. In terms of biological role, participates in electron transfer between P700 and the cytochrome b6-f complex in photosystem I. This Hordeum vulgare (Barley) protein is Plastocyanin, chloroplastic (PETE).